The primary structure comprises 435 residues: Cytochrome c biogenesis protein CcsB (435 aa).

A run of 3 helical transmembrane segments spans residues 11-31 (LRVA…GTAL), 69-89 (SDWF…CSWR), and 159-179 (VGPL…VWGV).

The protein belongs to the Ccs1/CcsB family. In terms of assembly, may interact with CcsA.

The protein localises to the plastid. It is found in the organellar chromatophore thylakoid membrane. In terms of biological role, required during biogenesis of c-type cytochromes (cytochrome c6 and cytochrome f) at the step of heme attachment. This is Cytochrome c biogenesis protein CcsB from Paulinella chromatophora.